We begin with the raw amino-acid sequence, 281 residues long: Trypsin zeta (281 aa).

Residues M1 to G23 form the signal peptide. Residues L24–R39 constitute a propeptide, activation peptide. The Peptidase S1 domain maps to I40 to A279. A disulfide bond links C73 and C89. Catalysis depends on charge relay system residues H88 and D135. Disulfide bonds link C199–C219 and C231–C255. S235 acts as the Charge relay system in catalysis.

It belongs to the peptidase S1 family.

The protein resides in the secreted. It localises to the extracellular space. The enzyme catalyses Preferential cleavage: Arg-|-Xaa, Lys-|-Xaa.. The polypeptide is Trypsin zeta (zetaTry) (Drosophila erecta (Fruit fly)).